Reading from the N-terminus, the 37-residue chain is Palicourein (37 aa).

The cyclopeptide (Gly-Asn) cross-link spans 1-37 (GDPTFCGETCRVIPVCTYSAALGCTCDDRSDGLCKRN). Disulfide bonds link Cys-6–Cys-24, Cys-10–Cys-26, and Cys-16–Cys-34.

The protein belongs to the cyclotide family. This is a cyclic peptide.

Probably participates in a plant defense mechanism. Inhibits the cytopathic effects of the human immunodeficiency virus. This chain is Palicourein, found in Palicourea condensata (Cappel).